The following is a 140-amino-acid chain: Pro-vaccinia growth factor (140 aa).

The first 18 residues, 1–18 (MSMKYLMLLFAAMIIRSF), serve as a signal peptide directing secretion. Topologically, residues 19-100 (ADSGNAIETT…SENPNTTTSY (82 aa)) are extracellular. N-linked (GlcNAc...) asparagine; by host glycosylation occurs at Asn34. In terms of domain architecture, EGF-like spans 41-81 (AIRLCGPEGDGYCLHGDCIHARDIDGMYCRCSHGYTGIRCQ). Cystine bridges form between Cys45–Cys58, Cys53–Cys69, and Cys71–Cys80. N-linked (GlcNAc...) asparagine; by host glycosylation is present at Asn95. A helical transmembrane segment spans residues 101–121 (IPSPGIVLVLVGIIIITCCSL). Over 122 to 140 (SVYRFTRRTKLPIQDMVVP) the chain is Cytoplasmic.

Belongs to the orthopoxvirus OPG019 family. Vaccinia growth factor interacts with host EGFR and promotes EGFR dimerization.

The protein resides in the host membrane. It is found in the secreted. Its function is as follows. Stimulates cellular proliferation (hyperplasia)and mobility around infected cells to promote rapid and efficient spread of infection. This effect is beneficial for virus replication in vivo, because poxviruses replicate possibly better in proliferating cells than in quiescent cells. Acts by binding host EGFR, inducing its dimerization, autophosphorylation and leading to activation of several cellular pathways regulating cell proliferation or cell survival. The activation by host EGFR of mitogen activated protein kinases (MAPK) and extracellular-signal regulated kinases (ERK) are essential for the positive effect of vaccinia growth factor on poxvirus virulence in vivo. The sequence is that of Pro-vaccinia growth factor (OPG019) from Vaccinia virus (strain L-IVP) (VACV).